A 489-amino-acid chain; its full sequence is Oxysterol-binding protein-related protein 1B (489 aa).

The protein belongs to the OSBP family. Expressed at low levels in flowers.

May be involved in the transport of sterols. This chain is Oxysterol-binding protein-related protein 1B (ORP1B), found in Arabidopsis thaliana (Mouse-ear cress).